Consider the following 435-residue polypeptide: Putative BTB/POZ domain-containing protein L275 (435 aa).

Positions tyrosine 80–asparagine 149 constitute a BTB domain.

Belongs to the mimivirus BTB/WD family.

The protein is Putative BTB/POZ domain-containing protein L275 of Acanthamoeba polyphaga mimivirus (APMV).